A 99-amino-acid chain; its full sequence is Large ribosomal subunit protein eL21 (99 aa).

The protein belongs to the eukaryotic ribosomal protein eL21 family.

In Methanocella arvoryzae (strain DSM 22066 / NBRC 105507 / MRE50), this protein is Large ribosomal subunit protein eL21.